The primary structure comprises 401 residues: Cytochrome P450 BJ-1 (401 aa).

A heme-binding site is contributed by Cys350.

Belongs to the cytochrome P450 family. It depends on heme as a cofactor.

Cytochromes P450 are a group of heme-thiolate monooxygenases. They oxidize a variety of structurally unrelated compounds, including steroids, fatty acids, and xenobiotics. In Bradyrhizobium diazoefficiens (strain JCM 10833 / BCRC 13528 / IAM 13628 / NBRC 14792 / USDA 110), this protein is Cytochrome P450 BJ-1 (cyp112).